The chain runs to 163 residues: MALNLQDKQAIVAEVNEAAKGALSAVIADSRGVTVDKMTELRKAAREAGVSMRVVRNTLLRRAVEGTEFECLTDTFTGPTLIAFSNEHPGAAARLFKDFAKANDKFEIKGAAFEGKIQDIDFLATLPTYEEAIARLMGTMKEAAAGKLVRTFAALRDKLQEAA.

Belongs to the universal ribosomal protein uL10 family. In terms of assembly, part of the ribosomal stalk of the 50S ribosomal subunit. The N-terminus interacts with L11 and the large rRNA to form the base of the stalk. The C-terminus forms an elongated spine to which L12 dimers bind in a sequential fashion forming a multimeric L10(L12)X complex.

Functionally, forms part of the ribosomal stalk, playing a central role in the interaction of the ribosome with GTP-bound translation factors. The protein is Large ribosomal subunit protein uL10 of Actinobacillus succinogenes (strain ATCC 55618 / DSM 22257 / CCUG 43843 / 130Z).